A 534-amino-acid polypeptide reads, in one-letter code: NAD(P)H-quinone oxidoreductase chain 4 1 (534 aa).

A run of 14 helical transmembrane segments spans residues 6-26, 34-54, 87-107, 113-133, 136-156, 169-189, 209-229, 243-263, 277-297, 311-331, 332-352, 376-396, 418-438, and 464-484; these read IPWL…IPLI, IRWY…TAFW, LSMP…LAAW, PKLF…VFAV, LLLF…LISI, FILY…ALAF, ALEL…LPIF, SAPV…YGLI, FAPL…LTAF, ISHM…GMNG, AVLQ…LSGV, FAMF…SGFV, IAIF…LSML, and IFVA…PKLA.

Belongs to the complex I subunit 4 family.

Its subcellular location is the cellular thylakoid membrane. The enzyme catalyses a plastoquinone + NADH + (n+1) H(+)(in) = a plastoquinol + NAD(+) + n H(+)(out). The catalysed reaction is a plastoquinone + NADPH + (n+1) H(+)(in) = a plastoquinol + NADP(+) + n H(+)(out). NDH-1 shuttles electrons from NAD(P)H, via FMN and iron-sulfur (Fe-S) centers, to quinones in the respiratory chain. The immediate electron acceptor for the enzyme in this species is believed to be plastoquinone. Couples the redox reaction to proton translocation (for every two electrons transferred, four hydrogen ions are translocated across the cytoplasmic membrane), and thus conserves the redox energy in a proton gradient. This Picosynechococcus sp. (strain ATCC 27264 / PCC 7002 / PR-6) (Agmenellum quadruplicatum) protein is NAD(P)H-quinone oxidoreductase chain 4 1.